A 537-amino-acid polypeptide reads, in one-letter code: Membrane protein insertase YidC (537 aa).

4 helical membrane-spanning segments follow: residues 5–25 (LIIA…IFPT), 353–373 (GNYG…FFPL), 418–438 (VNPL…FGLY), and 495–515 (MLML…GLVI).

This sequence belongs to the OXA1/ALB3/YidC family. Type 1 subfamily. In terms of assembly, interacts with the Sec translocase complex via SecD. Specifically interacts with transmembrane segments of nascent integral membrane proteins during membrane integration.

The protein localises to the cell inner membrane. Functionally, required for the insertion and/or proper folding and/or complex formation of integral membrane proteins into the membrane. Involved in integration of membrane proteins that insert both dependently and independently of the Sec translocase complex, as well as at least some lipoproteins. Aids folding of multispanning membrane proteins. This chain is Membrane protein insertase YidC, found in Citrifermentans bemidjiense (strain ATCC BAA-1014 / DSM 16622 / JCM 12645 / Bem) (Geobacter bemidjiensis).